Here is a 273-residue protein sequence, read N- to C-terminus: NADPH-dependent 7-cyano-7-deazaguanine reductase (273 aa).

Position 81-83 (81-83 (VES)) interacts with substrate. 83-84 (SK) lines the NADPH pocket. Residue cysteine 179 is the Thioimide intermediate of the active site. Residue aspartate 186 is the Proton donor of the active site. 218–219 (AE) is a substrate binding site. 247 to 248 (RG) provides a ligand contact to NADPH.

It belongs to the GTP cyclohydrolase I family. QueF type 2 subfamily. Homodimer.

It is found in the cytoplasm. The enzyme catalyses 7-aminomethyl-7-carbaguanine + 2 NADP(+) = 7-cyano-7-deazaguanine + 2 NADPH + 3 H(+). It functions in the pathway tRNA modification; tRNA-queuosine biosynthesis. Its function is as follows. Catalyzes the NADPH-dependent reduction of 7-cyano-7-deazaguanine (preQ0) to 7-aminomethyl-7-deazaguanine (preQ1). This Rickettsia akari (strain Hartford) protein is NADPH-dependent 7-cyano-7-deazaguanine reductase.